A 302-amino-acid polypeptide reads, in one-letter code: L-threonate dehydrogenase (302 aa).

NAD(+) is bound by residues 7 to 35 and Thr102; that span reads FHVG…TWGA. Lys178 is an active-site residue. Lys246 is an NAD(+) binding site.

This sequence belongs to the HIBADH-related family. L-threonate dehydrogenase subfamily.

The enzyme catalyses L-threonate + NAD(+) = 2-dehydro-L-erythronate + NADH + H(+). Catalyzes oxidation of L-threonate to 2-oxo-tetronate. Can use either NAD(+) or NADP(+) as cosubstrate, with a preference for NAD(+). In Escherichia coli (strain K12), this protein is L-threonate dehydrogenase.